A 365-amino-acid polypeptide reads, in one-letter code: UDP-N-acetylglucosamine--N-acetylmuramyl-(pentapeptide) pyrophosphoryl-undecaprenol N-acetylglucosamine transferase (365 aa).

Residues 17–19 (TGG), Asn-129, Arg-167, Ser-194, Ile-250, 269–274 (ALTVSE), and Gln-295 contribute to the UDP-N-acetyl-alpha-D-glucosamine site.

Belongs to the glycosyltransferase 28 family. MurG subfamily.

The protein localises to the cell inner membrane. The enzyme catalyses di-trans,octa-cis-undecaprenyl diphospho-N-acetyl-alpha-D-muramoyl-L-alanyl-D-glutamyl-meso-2,6-diaminopimeloyl-D-alanyl-D-alanine + UDP-N-acetyl-alpha-D-glucosamine = di-trans,octa-cis-undecaprenyl diphospho-[N-acetyl-alpha-D-glucosaminyl-(1-&gt;4)]-N-acetyl-alpha-D-muramoyl-L-alanyl-D-glutamyl-meso-2,6-diaminopimeloyl-D-alanyl-D-alanine + UDP + H(+). It participates in cell wall biogenesis; peptidoglycan biosynthesis. Cell wall formation. Catalyzes the transfer of a GlcNAc subunit on undecaprenyl-pyrophosphoryl-MurNAc-pentapeptide (lipid intermediate I) to form undecaprenyl-pyrophosphoryl-MurNAc-(pentapeptide)GlcNAc (lipid intermediate II). This is UDP-N-acetylglucosamine--N-acetylmuramyl-(pentapeptide) pyrophosphoryl-undecaprenol N-acetylglucosamine transferase from Shewanella violacea (strain JCM 10179 / CIP 106290 / LMG 19151 / DSS12).